Reading from the N-terminus, the 166-residue chain is Lipoprotein signal peptidase (166 aa).

3 helical membrane passes run Trp12 to Gln32, Trp70 to Ser90, and Ala102 to Val122. Catalysis depends on residues Asp123 and Asp141. Residues Phe137–Leu157 traverse the membrane as a helical segment.

Belongs to the peptidase A8 family.

Its subcellular location is the cell inner membrane. The catalysed reaction is Release of signal peptides from bacterial membrane prolipoproteins. Hydrolyzes -Xaa-Yaa-Zaa-|-(S,diacylglyceryl)Cys-, in which Xaa is hydrophobic (preferably Leu), and Yaa (Ala or Ser) and Zaa (Gly or Ala) have small, neutral side chains.. The protein operates within protein modification; lipoprotein biosynthesis (signal peptide cleavage). Functionally, this protein specifically catalyzes the removal of signal peptides from prolipoproteins. The protein is Lipoprotein signal peptidase of Salmonella agona (strain SL483).